Consider the following 236-residue polypeptide: MAFTFKQFHIDDLNCGMPVSTDGVILGAWAPLAEAKNILDIGAGSGLLSLMAAQRSQGQITAVELEEKAAAACRYNMTQSPWAKRCQLVHGDIQSVCQLAQYQGYFDHIICNPPYFEHGPKASEQHRAMARHTETLGFTPLLDAISQCLSFEGYASLILPIQSLARFKACLNDTALYLVREVWVKSVENKAANRALLLLSKTEVEPYQRTDLTIRGEDGNYTEQMIELTKDFYLKL.

Belongs to the methyltransferase superfamily. tRNA (adenine-N(6)-)-methyltransferase family.

It is found in the cytoplasm. It carries out the reaction adenosine(37) in tRNA1(Val) + S-adenosyl-L-methionine = N(6)-methyladenosine(37) in tRNA1(Val) + S-adenosyl-L-homocysteine + H(+). Functionally, specifically methylates the adenine in position 37 of tRNA(1)(Val) (anticodon cmo5UAC). The protein is tRNA1(Val) (adenine(37)-N6)-methyltransferase of Shewanella sp. (strain MR-4).